We begin with the raw amino-acid sequence, 430 residues long: MPDKTEYLLAINCGSSSIKGKLFAIPSFELLANLAVTNISSADERVKIRITWEEGKGKNSEEEADYGDKIRYASLVPILLDHLTNSTHVEKEEIKYVCHRVVHGGTHDRGIRVVKGHEEGLIEMDKLSEFAPLHNHRAVLAVKSCLDALPHHTSLLLFDTIFHQTIAPEVYTYALPPSDNELSMPLRKYGFHGLSYASIVRSLAEHLKKPSDQVNVVVAHLGSGSSSCCIKNGKSVDTSMGLTPLEGLLGGTRSGTIDPTAIFHHTKDAASDANVGDFTVSKAEIILNKNSGLKALAGTTNFGHIIQNLDPSKCSKEDHEKAKLTYAVFLDRLLNFVAQYLFKLLSEVPIESIDGLVFSGGIGEKGAELRRDVLKKLAWLGAEVDEEANNSNSGGTVKCITKEGSKLKGWVVETDEEGWMATMAKEEFGF.

A Mg(2+)-binding site is contributed by N12. An ATP-binding site is contributed by K19. Residue R100 coordinates substrate. D159 acts as the Proton donor/acceptor in catalysis. 220–224 contacts ATP; it reads HLGSG. Residue E416 participates in Mg(2+) binding.

The protein belongs to the acetokinase family. Mg(2+) serves as cofactor.

It catalyses the reaction acetate + ATP = acetyl phosphate + ADP. It participates in metabolic intermediate biosynthesis; acetyl-CoA biosynthesis; acetyl-CoA from acetate: step 1/2. This chain is Probable acetate kinase, found in Cryptococcus neoformans var. neoformans serotype D (strain B-3501A) (Filobasidiella neoformans).